The sequence spans 366 residues: 2-aminoethylphosphonate--pyruvate transaminase (366 aa).

The residue at position 194 (lysine 194) is an N6-(pyridoxal phosphate)lysine.

It belongs to the class-V pyridoxal-phosphate-dependent aminotransferase family. PhnW subfamily. In terms of assembly, homodimer. It depends on pyridoxal 5'-phosphate as a cofactor.

The catalysed reaction is (2-aminoethyl)phosphonate + pyruvate = phosphonoacetaldehyde + L-alanine. Its function is as follows. Involved in phosphonate degradation. The sequence is that of 2-aminoethylphosphonate--pyruvate transaminase from Lactiplantibacillus plantarum (strain ATCC BAA-793 / NCIMB 8826 / WCFS1) (Lactobacillus plantarum).